Reading from the N-terminus, the 235-residue chain is Probable tetraspanin tspA (235 aa).

Topologically, residues 1–18 (MVDTSNLLPQTPRLLKVP) are cytoplasmic. The helical transmembrane segment at 19-39 (LIILNIILWILGLVLVIVGGI) threads the bilayer. Residues 40-68 (CVSFLSNFKDFTKASDAKSALSNLTTSIP) lie on the Extracellular side of the membrane. A glycan (N-linked (GlcNAc...) asparagine) is linked at asparagine 62. A helical transmembrane segment spans residues 69–89 (AGVLVIGILFVIFTVVGCFVA). Over 90 to 93 (YKEK) the chain is Cytoplasmic. A helical transmembrane segment spans residues 94–114 (LVGLVIYCAVMLILLVILIGV). Over 115-200 (GGKAITLHND…FSSKIYAVGA (86 aa)) the chain is Extracellular. N-linked (GlcNAc...) asparagine glycans are attached at residues asparagine 139, asparagine 143, and asparagine 160. A helical transmembrane segment spans residues 201–221 (AGLAIGIIELVAILFSLFLII). Over 222-235 (RICRSPRTRSYDQY) the chain is Cytoplasmic.

Belongs to the tetraspanin (TM4SF) family.

The protein resides in the membrane. This Dictyostelium discoideum (Social amoeba) protein is Probable tetraspanin tspA (tspA).